The following is a 109-amino-acid chain: Ribonuclease (109 aa).

Glu72 serves as the catalytic Proton acceptor. His101 acts as the Proton donor in catalysis.

The protein belongs to the ribonuclease N1/T1 family.

Its subcellular location is the secreted. Hydrolyzes phosphodiester bonds in RNA, poly- and oligoribonucleotides resulting in 3'-nucleoside monophosphates via 2',3'-cyclophosphate intermediates. This is Ribonuclease from Heyndrickxia coagulans (Weizmannia coagulans).